We begin with the raw amino-acid sequence, 732 residues long: Protein FAR1-RELATED SEQUENCE 4 (732 aa).

Residues 11-97 (LFYKDYAKSV…VKEHNHDLLP (87 aa)) form the FAR1 domain. One can recognise an MULE domain in the interval 212 to 308 (VVSFETSYFV…CLWHVLDQLP (97 aa)). The SWIM-type zinc finger occupies 490–526 (YLVDWDEFKSDIYCSCRSFEYKGYLCRHAIVVLQMSG). The segment at 623–683 (QEENQYGSTS…ETVGEGSQEG (61 aa)) is disordered. The span at 624-635 (EENQYGSTSTQI) shows a compositional bias: polar residues.

The protein belongs to the FHY3/FAR1 family. Expressed in hypocotyls, rosette and cauline leaves, inflorescences stems, flowers and siliques.

It localises to the nucleus. Functionally, putative transcription activator involved in regulating light control of development. The sequence is that of Protein FAR1-RELATED SEQUENCE 4 (FRS4) from Arabidopsis thaliana (Mouse-ear cress).